Consider the following 263-residue polypeptide: Lens fiber major intrinsic protein (263 aa).

At 1–9 (MWEFRSFSF) the chain is on the cytoplasmic side. Residues 10–29 (WRAVFAEFFGTMFYVFFGLG) form a helical membrane-spanning segment. Over 30–41 (ASLKWAAGPANV) the chain is Extracellular. A helical transmembrane segment spans residues 42–59 (LVIALAFGLVLATMVQSI). Residues 60 to 61 (GH) are Cytoplasmic-facing. The segment at residues 62 to 77 (VSGAHINPAVTFAFLI) is an intramembrane region (discontinuously helical). The short motif at 68-70 (NPA) is the NPA 1 element. Over 78 to 82 (GSQMS) the chain is Cytoplasmic. A helical transmembrane segment spans residues 83–106 (LFRAIFYIAAQLLGAVAGAAVLYG). Residues 107–127 (VTPAAIRGNLALNTLHPGVSL) lie on the Extracellular side of the membrane. The helical transmembrane segment at 128 to 148 (GQATTVEIFLTLQFVLCIFAT) threads the bilayer. Residues 149–156 (YDERRNGR) lie on the Cytoplasmic side of the membrane. The chain crosses the membrane as a helical span at residues 157–175 (LGSVSLAIGFSLTLGHLFG). Over 176–178 (LYY) the chain is Extracellular. Positions 179-193 (TGASMNPARSFAPAV) form an intramembrane region, discontinuously helical. The NPA 2 motif lies at 184-186 (NPA). Over 194-200 (LTRNFTN) the chain is Extracellular. A helical transmembrane segment spans residues 201–222 (HWVYWVGPIIGGALGGLVYDFI). The Cytoplasmic portion of the chain corresponds to 223-263 (LFPRMRGLSERLSILKGARPAEPEGQQEATGEPIELKTQSL). Positions 227 to 237 (MRGLSERLSIL) are interaction with CALM. The disordered stretch occupies residues 241–263 (RPAEPEGQQEATGEPIELKTQSL).

The protein belongs to the MIP/aquaporin (TC 1.A.8) family. Homotetramer; each monomer provides an independent water pore. Two homotetramers on opposing membranes can dimerize, forming a cell-cell junction. Interacts with CALM; the calcium-calmodulin/CALM complex interacts with the cytoplasmic domains of two aquaporins, leading to channel closure.

Its subcellular location is the cell membrane. It is found in the cell junction. It carries out the reaction H2O(in) = H2O(out). With respect to regulation, the water channel activity is inhibited by calcium through calmodulin/CALM. In terms of biological role, aquaporins form homotetrameric transmembrane channels, with each monomer independently mediating water transport across the plasma membrane along its osmotic gradient. Specifically expressed in lens fiber cells, this aquaporin is crucial for maintaining lens water homeostasis and transparency. Beyond water permeability, it also acts as a cell-to-cell adhesion molecule, forming thin junctions between lens fiber cells that are essential for maintaining the ordered structure and transparency of the lens. The polypeptide is Lens fiber major intrinsic protein (Lithobates pipiens (Northern leopard frog)).